The chain runs to 418 residues: Bifunctional protein GlmU (418 aa).

A pyrophosphorylase region spans residues 1–236 (MAAVIVLAAG…VWQTEGVNDR (236 aa)). Residues 7 to 10 (LAAG), Lys-21, Gln-74, 79 to 80 (GT), 102 to 104 (YGD), Gly-141, Glu-155, Asn-170, and Asn-234 contribute to the UDP-N-acetyl-alpha-D-glucosamine site. Asp-104 contributes to the Mg(2+) binding site. Mg(2+) is bound at residue Asn-234. The interval 237–257 (VQLARMNAEVNRRIVTGWMRA) is linker. Residues 258–418 (GVTIIDPTST…DDTLNPEADQ (161 aa)) are N-acetyltransferase. The UDP-N-acetyl-alpha-D-glucosamine site is built by Arg-339 and Lys-357. His-369 acts as the Proton acceptor in catalysis. Tyr-372 contributes to the UDP-N-acetyl-alpha-D-glucosamine binding site. Ala-386 serves as a coordination point for acetyl-CoA.

This sequence in the N-terminal section; belongs to the N-acetylglucosamine-1-phosphate uridyltransferase family. In the C-terminal section; belongs to the transferase hexapeptide repeat family. In terms of assembly, homotrimer. Mg(2+) is required as a cofactor.

The protein resides in the cytoplasm. The catalysed reaction is alpha-D-glucosamine 1-phosphate + acetyl-CoA = N-acetyl-alpha-D-glucosamine 1-phosphate + CoA + H(+). The enzyme catalyses N-acetyl-alpha-D-glucosamine 1-phosphate + UTP + H(+) = UDP-N-acetyl-alpha-D-glucosamine + diphosphate. It participates in nucleotide-sugar biosynthesis; UDP-N-acetyl-alpha-D-glucosamine biosynthesis; N-acetyl-alpha-D-glucosamine 1-phosphate from alpha-D-glucosamine 6-phosphate (route II): step 2/2. Its pathway is nucleotide-sugar biosynthesis; UDP-N-acetyl-alpha-D-glucosamine biosynthesis; UDP-N-acetyl-alpha-D-glucosamine from N-acetyl-alpha-D-glucosamine 1-phosphate: step 1/1. The protein operates within bacterial outer membrane biogenesis; LPS lipid A biosynthesis. Its function is as follows. Catalyzes the last two sequential reactions in the de novo biosynthetic pathway for UDP-N-acetylglucosamine (UDP-GlcNAc). The C-terminal domain catalyzes the transfer of acetyl group from acetyl coenzyme A to glucosamine-1-phosphate (GlcN-1-P) to produce N-acetylglucosamine-1-phosphate (GlcNAc-1-P), which is converted into UDP-GlcNAc by the transfer of uridine 5-monophosphate (from uridine 5-triphosphate), a reaction catalyzed by the N-terminal domain. This chain is Bifunctional protein GlmU, found in Cutibacterium acnes (strain DSM 16379 / KPA171202) (Propionibacterium acnes).